The chain runs to 137 residues: Putative pre-16S rRNA nuclease (137 aa).

Belongs to the YqgF nuclease family.

It is found in the cytoplasm. Functionally, could be a nuclease involved in processing of the 5'-end of pre-16S rRNA. This Anaeromyxobacter dehalogenans (strain 2CP-1 / ATCC BAA-258) protein is Putative pre-16S rRNA nuclease.